Consider the following 624-residue polypeptide: Probable Xaa-Pro aminopeptidase P (624 aa).

Aspartate 414, aspartate 425, glutamate 530, and glutamate 544 together coordinate Mn(2+).

Belongs to the peptidase M24B family. Mn(2+) serves as cofactor.

The enzyme catalyses Release of any N-terminal amino acid, including proline, that is linked to proline, even from a dipeptide or tripeptide.. Functionally, catalyzes the removal of a penultimate prolyl residue from the N-termini of peptides. The chain is Probable Xaa-Pro aminopeptidase P (AMPP) from Chaetomium globosum (strain ATCC 6205 / CBS 148.51 / DSM 1962 / NBRC 6347 / NRRL 1970) (Soil fungus).